We begin with the raw amino-acid sequence, 312 residues long: DNA-directed RNA polymerase subunit alpha (312 aa).

Residues 1–226 (MIEFEKPNIT…EHLNLFTNLT (226 aa)) form an alpha N-terminal domain (alpha-NTD) region. Positions 243-312 (DDRILERTIE…DLGLGLKNDK (70 aa)) are alpha C-terminal domain (alpha-CTD).

It belongs to the RNA polymerase alpha chain family. In terms of assembly, homodimer. The RNAP catalytic core consists of 2 alpha, 1 beta, 1 beta' and 1 omega subunit. When a sigma factor is associated with the core the holoenzyme is formed, which can initiate transcription.

The catalysed reaction is RNA(n) + a ribonucleoside 5'-triphosphate = RNA(n+1) + diphosphate. In terms of biological role, DNA-dependent RNA polymerase catalyzes the transcription of DNA into RNA using the four ribonucleoside triphosphates as substrates. The polypeptide is DNA-directed RNA polymerase subunit alpha (Streptococcus sanguinis (strain SK36)).